The chain runs to 277 residues: Large ribosomal subunit protein uL2 (277 aa).

Disordered regions lie at residues 32-58 (KSLT…RGGG) and 225-277 (VAMN…RRNK). A compositionally biased stretch (basic residues) spans 258-277 (YKTRKKKRYSDKFIIKRRNK).

The protein belongs to the universal ribosomal protein uL2 family. Part of the 50S ribosomal subunit. Forms a bridge to the 30S subunit in the 70S ribosome.

Its function is as follows. One of the primary rRNA binding proteins. Required for association of the 30S and 50S subunits to form the 70S ribosome, for tRNA binding and peptide bond formation. It has been suggested to have peptidyltransferase activity; this is somewhat controversial. Makes several contacts with the 16S rRNA in the 70S ribosome. The protein is Large ribosomal subunit protein uL2 of Borrelia garinii subsp. bavariensis (strain ATCC BAA-2496 / DSM 23469 / PBi) (Borreliella bavariensis).